The sequence spans 881 residues: Valine--tRNA ligase (881 aa).

The 'HIGH' region motif lies at 42–52 (PNITGDLHVGH). Residues 554–558 (KMSKS) carry the 'KMSKS' region motif. Lys557 is an ATP binding site.

The protein belongs to the class-I aminoacyl-tRNA synthetase family. ValS type 1 subfamily. Monomer.

The protein resides in the cytoplasm. It carries out the reaction tRNA(Val) + L-valine + ATP = L-valyl-tRNA(Val) + AMP + diphosphate. In terms of biological role, catalyzes the attachment of valine to tRNA(Val). As ValRS can inadvertently accommodate and process structurally similar amino acids such as threonine, to avoid such errors, it has a 'posttransfer' editing activity that hydrolyzes mischarged Thr-tRNA(Val) in a tRNA-dependent manner. This is Valine--tRNA ligase from Wigglesworthia glossinidia brevipalpis.